The sequence spans 255 residues: Type III pantothenate kinase (255 aa).

ATP is bound at residue 6 to 13; sequence DIGNTNIK. Residue 107 to 110 coordinates substrate; sequence GADR. Catalysis depends on aspartate 109, which acts as the Proton acceptor. Threonine 132 contributes to the ATP binding site. Substrate is bound at residue threonine 184.

This sequence belongs to the type III pantothenate kinase family. Homodimer. NH4(+) is required as a cofactor. The cofactor is K(+).

Its subcellular location is the cytoplasm. The catalysed reaction is (R)-pantothenate + ATP = (R)-4'-phosphopantothenate + ADP + H(+). The protein operates within cofactor biosynthesis; coenzyme A biosynthesis; CoA from (R)-pantothenate: step 1/5. Catalyzes the phosphorylation of pantothenate (Pan), the first step in CoA biosynthesis. The polypeptide is Type III pantothenate kinase (Roseiflexus castenholzii (strain DSM 13941 / HLO8)).